Reading from the N-terminus, the 247-residue chain is 2,3-bisphosphoglycerate-dependent phosphoglycerate mutase (247 aa).

Substrate-binding positions include 8-15, 21-22, Arg60, 87-90, Lys98, 114-115, and 183-184; these read RHGESVWN, TG, ERHY, RR, and GN. Catalysis depends on His9, which acts as the Tele-phosphohistidine intermediate. Glu87 acts as the Proton donor/acceptor in catalysis.

Belongs to the phosphoglycerate mutase family. BPG-dependent PGAM subfamily. Homodimer.

The enzyme catalyses (2R)-2-phosphoglycerate = (2R)-3-phosphoglycerate. The protein operates within carbohydrate degradation; glycolysis; pyruvate from D-glyceraldehyde 3-phosphate: step 3/5. Catalyzes the interconversion of 2-phosphoglycerate and 3-phosphoglycerate. This Geobacter metallireducens (strain ATCC 53774 / DSM 7210 / GS-15) protein is 2,3-bisphosphoglycerate-dependent phosphoglycerate mutase.